The sequence spans 247 residues: uncharacterized protein (247 aa).

NADP(+) is bound at residue 4 to 28 (ALVTGGSRGIGRATALLLAQEGYTV). Ser-142 contacts substrate. Tyr-156 acts as the Proton acceptor in catalysis.

It belongs to the short-chain dehydrogenases/reductases (SDR) family.

This is an uncharacterized protein from Escherichia coli (strain K12).